We begin with the raw amino-acid sequence, 654 residues long: Beta-mannosyltransferase 2 (654 aa).

At 1–37 (MLAWLRHRIRSYNTSTYSSILPSASFGKVYKIGTKLN) the chain is on the cytoplasmic side. A helical transmembrane segment spans residues 38–58 (FTLLALCLLLACSVFFNYFYL). The Extracellular portion of the chain corresponds to 59–654 (ADNNGLDIDT…ANGNGKGSSS (596 aa)).

Belongs to the BMT family.

Its subcellular location is the membrane. Beta-mannosyltransferase involved in cell wall biosynthesis. Required for the addition of beta-mannose to the acid-labile fraction of cell wall phosphopeptidomannan. This chain is Beta-mannosyltransferase 2 (RHD1), found in Candida albicans (strain SC5314 / ATCC MYA-2876) (Yeast).